The sequence spans 1032 residues: Unconventional myosin-Ih (1032 aa).

The region spanning 12-701 (GVQDFVLLDA…TLFATEDAFE (690 aa)) is the Myosin motor domain. 105 to 112 (GESGAGKT) provides a ligand contact to ATP. A Phosphoserine modification is found at Ser365. The interval 578-600 (LSSLLETLISKEPSYIRCIKPND) is actin-binding. IQ domains are found at residues 704 to 726 (KHQL…EYVK) and 727 to 756 (KRQA…AVRI). Residues 855–1029 (KDGYTESLNQ…NGQLTVVSVR (175 aa)) form the TH1 domain.

This sequence belongs to the TRAFAC class myosin-kinesin ATPase superfamily. Myosin family.

Its function is as follows. Myosins are actin-based motor molecules with ATPase activity. Unconventional myosins serve in intracellular movements. Their highly divergent tails are presumed to bind to membranous compartments, which would be moved relative to actin filaments. The polypeptide is Unconventional myosin-Ih (MYO1H) (Homo sapiens (Human)).